The primary structure comprises 476 residues: Siroheme synthase (476 aa).

The interval 1–203 (MHYFPVFADL…RQTEAAKKEL (203 aa)) is precorrin-2 dehydrogenase /sirohydrochlorin ferrochelatase. NAD(+) is bound by residues 22–23 (GV) and 43–44 (QK). Ser-128 is subject to Phosphoserine. Positions 214 to 476 (GFVSLVGAGP…LDSLRIESVA (263 aa)) are uroporphyrinogen-III C-methyltransferase. Pro-223 is an S-adenosyl-L-methionine binding site. Asp-246 serves as the catalytic Proton acceptor. The Proton donor role is filled by Lys-268. S-adenosyl-L-methionine is bound by residues 299–301 (GGD), Val-304, 329–330 (TA), Met-381, and Gly-410.

This sequence in the N-terminal section; belongs to the precorrin-2 dehydrogenase / sirohydrochlorin ferrochelatase family. In the C-terminal section; belongs to the precorrin methyltransferase family.

It catalyses the reaction uroporphyrinogen III + 2 S-adenosyl-L-methionine = precorrin-2 + 2 S-adenosyl-L-homocysteine + H(+). The enzyme catalyses precorrin-2 + NAD(+) = sirohydrochlorin + NADH + 2 H(+). The catalysed reaction is siroheme + 2 H(+) = sirohydrochlorin + Fe(2+). It participates in cofactor biosynthesis; adenosylcobalamin biosynthesis; precorrin-2 from uroporphyrinogen III: step 1/1. The protein operates within cofactor biosynthesis; adenosylcobalamin biosynthesis; sirohydrochlorin from precorrin-2: step 1/1. Its pathway is porphyrin-containing compound metabolism; siroheme biosynthesis; precorrin-2 from uroporphyrinogen III: step 1/1. It functions in the pathway porphyrin-containing compound metabolism; siroheme biosynthesis; siroheme from sirohydrochlorin: step 1/1. It participates in porphyrin-containing compound metabolism; siroheme biosynthesis; sirohydrochlorin from precorrin-2: step 1/1. Functionally, multifunctional enzyme that catalyzes the SAM-dependent methylations of uroporphyrinogen III at position C-2 and C-7 to form precorrin-2 via precorrin-1. Then it catalyzes the NAD-dependent ring dehydrogenation of precorrin-2 to yield sirohydrochlorin. Finally, it catalyzes the ferrochelation of sirohydrochlorin to yield siroheme. In Actinobacillus succinogenes (strain ATCC 55618 / DSM 22257 / CCUG 43843 / 130Z), this protein is Siroheme synthase.